The primary structure comprises 273 residues: Dermonecrotic toxin LhSicTox-alphaIA2bvi (273 aa).

Residue His-5 is part of the active site. 2 residues coordinate Mg(2+): Glu-25 and Asp-27. His-41 functions as the Nucleophile in the catalytic mechanism. Cystine bridges form between Cys-45-Cys-51 and Cys-47-Cys-190. Asp-85 contributes to the Mg(2+) binding site.

This sequence belongs to the arthropod phospholipase D family. Class II subfamily. Mg(2+) serves as cofactor. In terms of tissue distribution, expressed by the venom gland.

It is found in the secreted. It carries out the reaction an N-(acyl)-sphingosylphosphocholine = an N-(acyl)-sphingosyl-1,3-cyclic phosphate + choline. The catalysed reaction is an N-(acyl)-sphingosylphosphoethanolamine = an N-(acyl)-sphingosyl-1,3-cyclic phosphate + ethanolamine. It catalyses the reaction a 1-acyl-sn-glycero-3-phosphocholine = a 1-acyl-sn-glycero-2,3-cyclic phosphate + choline. The enzyme catalyses a 1-acyl-sn-glycero-3-phosphoethanolamine = a 1-acyl-sn-glycero-2,3-cyclic phosphate + ethanolamine. In terms of biological role, dermonecrotic toxins cleave the phosphodiester linkage between the phosphate and headgroup of certain phospholipids (sphingolipid and lysolipid substrates), forming an alcohol (often choline) and a cyclic phosphate. This toxin acts on sphingomyelin (SM). It may also act on ceramide phosphoethanolamine (CPE), lysophosphatidylcholine (LPC) and lysophosphatidylethanolamine (LPE), but not on lysophosphatidylserine (LPS), and lysophosphatidylglycerol (LPG). It acts by transphosphatidylation, releasing exclusively cyclic phosphate products as second products. Induces dermonecrosis, hemolysis, increased vascular permeability, edema, inflammatory response, and platelet aggregation. This Loxosceles hirsuta (Recluse spider) protein is Dermonecrotic toxin LhSicTox-alphaIA2bvi.